The chain runs to 110 residues: Large ribosomal subunit protein eL34 (110 aa).

Residues 1–41 (MKNVLIHKGATYKTRSNRRRKVRTPSGKLVNRRVKKHSKKH) are disordered. Basic residues predominate over residues 30–41 (VNRRVKKHSKKH).

The protein belongs to the eukaryotic ribosomal protein eL34 family.

The chain is Large ribosomal subunit protein eL34 (RPL34) from Encephalitozoon cuniculi (strain GB-M1) (Microsporidian parasite).